The primary structure comprises 476 residues: Cysteine--tRNA ligase (476 aa).

C30 serves as a coordination point for Zn(2+). The 'HIGH' region signature appears at 32-42 (PTVYNYIHIGN). Zn(2+) is bound by residues C215, H240, and E244. A 'KMSKS' region motif is present at residues 274 to 278 (KMSKS). K277 lines the ATP pocket.

It belongs to the class-I aminoacyl-tRNA synthetase family. Monomer. Zn(2+) serves as cofactor.

It is found in the cytoplasm. The enzyme catalyses tRNA(Cys) + L-cysteine + ATP = L-cysteinyl-tRNA(Cys) + AMP + diphosphate. The polypeptide is Cysteine--tRNA ligase (Lactobacillus helveticus (strain DPC 4571)).